The sequence spans 604 residues: Serine protease 56 (604 aa).

The signal sequence occupies residues 1 to 22 (MPLAMLLLLLLLLSPDSQTAHG). A disordered region spans residues 70–94 (CQGPGRPRPQAPLLQDPPEPVQCGE). Residues 75 to 89 (RPRPQAPLLQDPPEP) show a composition bias toward pro residues. N-linked (GlcNAc...) asparagine glycosylation occurs at Asn-101. The 233-residue stretch at 109–341 (IVGGSTAPSG…FKDWLQEQMS (233 aa)) folds into the Peptidase S1 domain. A disulfide bridge connects residues Cys-134 and Cys-150. Residues His-149 and Asp-195 each act as charge relay system in the active site. Disulfide bonds link Cys-229-Cys-296, Cys-260-Cys-275, and Cys-286-Cys-317. The active-site Charge relay system is Ser-290. Disordered stretches follow at residues 424 to 452 (RPGLRRGVSAPARSAPSLQELPGHNPREQ) and 578 to 604 (PQAPWIGADQGQRLGKERQGQLQPPVP).

This sequence belongs to the peptidase S1 family. As to expression, expressed in the eye: present in the retina and in the optic nerve.

It is found in the endoplasmic reticulum membrane. Serine protease required during eye development. The polypeptide is Serine protease 56 (Prss56) (Mus musculus (Mouse)).